Consider the following 840-residue polypeptide: N-acetyltransferase ESCO1 (840 aa).

The span at 1–25 (MMSIQEKSKENSSKVTKKSDDKNSE) shows a compositional bias: basic and acidic residues. Residues 1 to 188 (MMSIQEKSKE…VLEVKSDSKE (188 aa)) are disordered. Composition is skewed to polar residues over residues 46 to 58 (KSQAKSSSESKIN), 65 to 74 (RMSTRSSKAA), and 81 to 96 (KSINKNTVTVRGYSQE). Residues 131-140 (VSRRSLRSRE) are compositionally biased toward basic and acidic residues. Residues 141–153 (IQGQVQAVKQSLP) show a composition bias toward polar residues. Low complexity predominate over residues 161–170 (SSTQSKSNKT). Positions 178–188 (KVLEVKSDSKE) are enriched in basic and acidic residues. Ser200 bears the Phosphoserine mark. Disordered stretches follow at residues 221–300 (TQGS…KSKR) and 318–338 (NVEVKKESSQMESVKEEKPTE). Polar residues predominate over residues 267–278 (HTQVNTNTTLPK). Residues 319 to 338 (VEVKKESSQMESVKEEKPTE) show a composition bias toward basic and acidic residues. Lys332 is covalently cross-linked (Glycyl lysine isopeptide (Lys-Gly) (interchain with G-Cter in SUMO2)). Ser412 bears the Phosphoserine mark. Disordered stretches follow at residues 486 to 505 (ANEIKPSDPPLDNQMKHSFD) and 542 to 582 (TGEN…KCNS). The segment covering 551 to 565 (APQQHSILSNQTSKS) has biased composition (polar residues). The CCHH-type zinc-finger motif lies at 617 to 641 (VSCNVCGMLYTASNPEDETQHLLFH). Acetyl-CoA-binding positions include 772–774 (IWV), 780–785 (RKKIAS), and 812–814 (TPD).

This sequence belongs to the acetyltransferase family. ECO subfamily. The subunit structure is controversial. Monomer. Homodimer. Post-translationally, phosphorylated during mitosis, when associated with chromosomes. As to expression, widely expressed. Expressed in heart, brain, liver, placenta, lung, kidney and pancreas. Highly expressed in muscle.

It is found in the nucleus. The protein localises to the chromosome. It carries out the reaction L-lysyl-[protein] + acetyl-CoA = N(6)-acetyl-L-lysyl-[protein] + CoA + H(+). Acetyltransferase required for the establishment of sister chromatid cohesion. Couples the processes of cohesion and DNA replication to ensure that only sister chromatids become paired together. In contrast to the structural cohesins, the deposition and establishment factors are required only during S phase. Acts by mediating the acetylation of cohesin component SMC3. This chain is N-acetyltransferase ESCO1 (ESCO1), found in Homo sapiens (Human).